Consider the following 338-residue polypeptide: RNA 3'-terminal phosphate cyclase (338 aa).

ATP-binding positions include Gln-103 and 283–287; that span reads YLADQ. His-308 (tele-AMP-histidine intermediate) is an active-site residue.

This sequence belongs to the RNA 3'-terminal cyclase family. Type 1 subfamily.

It is found in the cytoplasm. The enzyme catalyses a 3'-end 3'-phospho-ribonucleotide-RNA + ATP = a 3'-end 2',3'-cyclophospho-ribonucleotide-RNA + AMP + diphosphate. Its function is as follows. Catalyzes the conversion of 3'-phosphate to a 2',3'-cyclic phosphodiester at the end of RNA. The mechanism of action of the enzyme occurs in 3 steps: (A) adenylation of the enzyme by ATP; (B) transfer of adenylate to an RNA-N3'P to produce RNA-N3'PP5'A; (C) and attack of the adjacent 2'-hydroxyl on the 3'-phosphorus in the diester linkage to produce the cyclic end product. The biological role of this enzyme is unknown but it is likely to function in some aspects of cellular RNA processing. This chain is RNA 3'-terminal phosphate cyclase, found in Escherichia coli O17:K52:H18 (strain UMN026 / ExPEC).